The chain runs to 323 residues: 4-hydroxy-3-methylbut-2-enyl diphosphate reductase (323 aa).

Cys-21 provides a ligand contact to [4Fe-4S] cluster. Residues His-50 and His-83 each contribute to the (2E)-4-hydroxy-3-methylbut-2-enyl diphosphate site. The dimethylallyl diphosphate site is built by His-50 and His-83. 2 residues coordinate isopentenyl diphosphate: His-50 and His-83. Cys-105 is a binding site for [4Fe-4S] cluster. His-133 is a (2E)-4-hydroxy-3-methylbut-2-enyl diphosphate binding site. Residue His-133 participates in dimethylallyl diphosphate binding. Isopentenyl diphosphate is bound at residue His-133. Glu-135 functions as the Proton donor in the catalytic mechanism. Thr-173 is a (2E)-4-hydroxy-3-methylbut-2-enyl diphosphate binding site. Cys-203 is a [4Fe-4S] cluster binding site. Ser-231, Ser-232, Asn-233, and Ser-276 together coordinate (2E)-4-hydroxy-3-methylbut-2-enyl diphosphate. Residues Ser-231, Ser-232, Asn-233, and Ser-276 each contribute to the dimethylallyl diphosphate site. Positions 231, 232, 233, and 276 each coordinate isopentenyl diphosphate.

Belongs to the IspH family. [4Fe-4S] cluster serves as cofactor.

It carries out the reaction isopentenyl diphosphate + 2 oxidized [2Fe-2S]-[ferredoxin] + H2O = (2E)-4-hydroxy-3-methylbut-2-enyl diphosphate + 2 reduced [2Fe-2S]-[ferredoxin] + 2 H(+). The catalysed reaction is dimethylallyl diphosphate + 2 oxidized [2Fe-2S]-[ferredoxin] + H2O = (2E)-4-hydroxy-3-methylbut-2-enyl diphosphate + 2 reduced [2Fe-2S]-[ferredoxin] + 2 H(+). It functions in the pathway isoprenoid biosynthesis; dimethylallyl diphosphate biosynthesis; dimethylallyl diphosphate from (2E)-4-hydroxy-3-methylbutenyl diphosphate: step 1/1. The protein operates within isoprenoid biosynthesis; isopentenyl diphosphate biosynthesis via DXP pathway; isopentenyl diphosphate from 1-deoxy-D-xylulose 5-phosphate: step 6/6. Its function is as follows. Catalyzes the conversion of 1-hydroxy-2-methyl-2-(E)-butenyl 4-diphosphate (HMBPP) into a mixture of isopentenyl diphosphate (IPP) and dimethylallyl diphosphate (DMAPP). Acts in the terminal step of the DOXP/MEP pathway for isoprenoid precursor biosynthesis. The polypeptide is 4-hydroxy-3-methylbut-2-enyl diphosphate reductase (Cutibacterium acnes (strain DSM 16379 / KPA171202) (Propionibacterium acnes)).